The chain runs to 191 residues: Ribosomal RNA small subunit methyltransferase G (191 aa).

Residues glycine 59, 111–112 (IE), and arginine 124 contribute to the S-adenosyl-L-methionine site.

The protein belongs to the methyltransferase superfamily. RNA methyltransferase RsmG family.

The protein resides in the cytoplasm. In terms of biological role, specifically methylates the N7 position of a guanine in 16S rRNA. The protein is Ribosomal RNA small subunit methyltransferase G of Mycoplasma pneumoniae (strain ATCC 29342 / M129 / Subtype 1) (Mycoplasmoides pneumoniae).